Consider the following 427-residue polypeptide: CD209 antigen (427 aa).

Topologically, residues 1 to 37 are cytoplasmic; it reads MSDSKEPRLQQLGLLEEEQLRGLGFRQTRGYKSLAGC. Short sequence motifs (endocytosis signal) lie at residues 14–15, 16–18, and 31–34; these read LL, EEE, and YKSL. The helical; Signal-anchor for type II membrane protein transmembrane segment at 38 to 58 threads the bilayer; the sequence is LGHGPLVLQLLSFTLLAALLV. The Extracellular segment spans residues 59–427; that stretch reads QVSKVPSSIS…ASATPNPPPE (369 aa). The N-linked (GlcNAc...) asparagine glycan is linked to N80. A run of 8 repeats spans residues 96–118, 119–141, 142–164, 165–187, 188–210, 211–233, 234–256, and 257–280. The 8 X approximate tandem repeats stretch occupies residues 96–280; sequence KLQEIYQELT…AVERLCRRCP (185 aa). 3 disulfides stabilise this stretch: C279-C290, C307-C400, and C379-C392. The C-type lectin domain occupies 286–401; it reads FQGNCYFMSN…CNLAKFWICK (116 aa). E370, N372, V374, E377, N388, and D389 together coordinate Ca(2+).

In terms of assembly, homotetramer. Interacts with C1QBP; the interaction is indicative for a C1q:C1QBP:CD209 signaling complex. Interacts with ICAM2 and ICAM3 by binding to mannose-like carbohydrates. Interacts (via C-type lectin domain) with CEACAM1 (via Lewis X moieties); this interaction is regulated by the glycosylation pattern of CEACAM1 on cell types and regulates contact between dendritic cells and neutrophils.

It is found in the membrane. In terms of biological role, pathogen-recognition receptor expressed on the surface of immature dendritic cells (DCs) and involved in initiation of primary immune response. Thought to mediate the endocytosis of pathogens which are subsequently degraded in lysosomal compartments. The receptor returns to the cell membrane surface and the pathogen-derived antigens are presented to resting T-cells via MHC class II proteins to initiate the adaptive immune response. Probably recognizes in a calcium-dependent manner high mannose N-linked oligosaccharides in a variety of pathogen antigens. Functionally, on DCs it is a high affinity receptor for ICAM2 and ICAM3 by binding to mannose-like carbohydrates. May act as a DC rolling receptor that mediates transendothelial migration of DC presursors from blood to tissues by binding endothelial ICAM2. Seems to regulate DC-induced T-cell proliferation by binding to ICAM3 on T-cells in the immunological synapse formed between DC and T-cells. The polypeptide is CD209 antigen (CD209) (Gorilla gorilla gorilla (Western lowland gorilla)).